The following is a 324-amino-acid chain: Sex-lethal homolog (324 aa).

2 RRM domains span residues 102-180 (TNLI…YARP) and 188-268 (TNLY…LAEE).

In terms of tissue distribution, expressed in somatic cells of both sexes throughout development, but not in the pole cells which are the progenitors of the germline.

It localises to the nucleus. In terms of biological role, unknown; apparently not involved in somatic sex determination. The sequence is that of Sex-lethal homolog (SXL) from Musca domestica (House fly).